We begin with the raw amino-acid sequence, 394 residues long: MFELVDNIAQTAVIKVIGVGGGGGNAVNHMAKNNVEGVEFICANTDAQALKNIAARTVLQLGPGVTKGLGAGANPEVGRQAALEDRERISEVLEGADMVFITTGMGGGTGTGAAPIIAEVAKEMGILTVAVVTRPFPFEGRKRMQIADEGIRALAESVDSLITIPNEKLLTILGKDASLLAAFAKADDVLAGAVRGISDIIKRPGMINVDFADVKTVMSEMGMAMMGTGCASGPNRAREATEAAIRNPLLEDVNLQGARGILVNITAGPDLSLGEYSDVGNIIEQFASEHATVKVGTVIDADMRDELHVTVVATGLGARLEKPVKVVDNTVQGSAAQAAAPAQREQQSVNYRDLDRPTVMRNQSHGSAATAAKLNPQDDLDYLDIPAFLRRQAD.

GTP contacts are provided by residues 21 to 25 (GGGGN), 108 to 110 (GTG), Glu139, Arg143, and Asp187.

The protein belongs to the FtsZ family. Homodimer. Polymerizes to form a dynamic ring structure in a strictly GTP-dependent manner. Interacts directly with several other division proteins. Interacts with the SulA inhibitor.

The protein resides in the cytoplasm. In terms of biological role, essential cell division protein that forms a contractile ring structure (Z ring) at the future cell division site. The regulation of the ring assembly controls the timing and the location of cell division. One of the functions of the FtsZ ring is to recruit other cell division proteins to the septum to produce a new cell wall between the dividing cells. Binds GTP and shows GTPase activity. This Pseudomonas aeruginosa (strain ATCC 15692 / DSM 22644 / CIP 104116 / JCM 14847 / LMG 12228 / 1C / PRS 101 / PAO1) protein is Cell division protein FtsZ.